An 89-amino-acid chain; its full sequence is Small ribosomal subunit protein uS15 (89 aa).

Belongs to the universal ribosomal protein uS15 family. As to quaternary structure, part of the 30S ribosomal subunit. Forms a bridge to the 50S subunit in the 70S ribosome, contacting the 23S rRNA.

One of the primary rRNA binding proteins, it binds directly to 16S rRNA where it helps nucleate assembly of the platform of the 30S subunit by binding and bridging several RNA helices of the 16S rRNA. Its function is as follows. Forms an intersubunit bridge (bridge B4) with the 23S rRNA of the 50S subunit in the ribosome. The polypeptide is Small ribosomal subunit protein uS15 (Streptococcus gordonii (strain Challis / ATCC 35105 / BCRC 15272 / CH1 / DL1 / V288)).